Consider the following 248-residue polypeptide: PACRG-like protein (248 aa).

M1 carries the post-translational modification N-acetylmethionine. Residues 1–29 are compositionally biased toward polar residues; the sequence is MQKSEGSGGTQLKNRATGNYDQRTSSSTQ. The segment at 1–71 is disordered; that stretch reads MQKSEGSGGT…LNPKTINPFG (71 aa). Low complexity predominate over residues 39–49; it reads SKSSLSTSSPE. Residue S47 is modified to Phosphoserine.

The chain is PACRG-like protein (PACRGL) from Homo sapiens (Human).